The chain runs to 601 residues: Elongation factor 4 (601 aa).

Residues 7 to 189 (SNVRNFSIVA…AIVTRLPPPK (183 aa)) form the tr-type G domain. GTP is bound by residues 19-24 (DHGKST) and 136-139 (NKVD).

Belongs to the TRAFAC class translation factor GTPase superfamily. Classic translation factor GTPase family. LepA subfamily.

The protein localises to the cell inner membrane. It catalyses the reaction GTP + H2O = GDP + phosphate + H(+). Required for accurate and efficient protein synthesis under certain stress conditions. May act as a fidelity factor of the translation reaction, by catalyzing a one-codon backward translocation of tRNAs on improperly translocated ribosomes. Back-translocation proceeds from a post-translocation (POST) complex to a pre-translocation (PRE) complex, thus giving elongation factor G a second chance to translocate the tRNAs correctly. Binds to ribosomes in a GTP-dependent manner. The sequence is that of Elongation factor 4 from Afipia carboxidovorans (strain ATCC 49405 / DSM 1227 / KCTC 32145 / OM5) (Oligotropha carboxidovorans).